The following is a 38-amino-acid chain: MKIYSSIKKRCEHCRIVKRKGKRYVICKVNPSHKQRQG.

Belongs to the bacterial ribosomal protein bL36 family.

This is Large ribosomal subunit protein bL36 from Pelodictyon phaeoclathratiforme (strain DSM 5477 / BU-1).